The primary structure comprises 456 residues: UDP-glycosyltransferase 84B1 (456 aa).

Residues Ser-278, 332–334 (SPQ), 349–357 (HCGWNSTME), and 371–374 (WTDQ) contribute to the UDP-alpha-D-glucose site.

It belongs to the UDP-glycosyltransferase family.

Functionally, possesses low quercetin 7-O-glucosyltransferase activity in vitro. This chain is UDP-glycosyltransferase 84B1 (UGT84B1), found in Arabidopsis thaliana (Mouse-ear cress).